An 841-amino-acid chain; its full sequence is Probable alpha-glucuronidase A (841 aa).

A signal peptide spans 1 to 20 (MRGLNLFQLILALLLSMVAA). 15 N-linked (GlcNAc...) asparagine glycosylation sites follow: Asn-51, Asn-76, Asn-85, Asn-149, Asn-222, Asn-279, Asn-310, Asn-343, Asn-450, Asn-465, Asn-527, Asn-576, Asn-682, Asn-723, and Asn-732.

It belongs to the glycosyl hydrolase 67 family.

Its subcellular location is the secreted. The catalysed reaction is an alpha-D-glucuronoside + H2O = D-glucuronate + an alcohol. Alpha-glucuronidase involved in the hydrolysis of xylan, a major structural heterogeneous polysaccharide found in plant biomass representing the second most abundant polysaccharide in the biosphere, after cellulose. Releases 4-O-methylglucuronic acid from xylan. The polypeptide is Probable alpha-glucuronidase A (aguA) (Aspergillus niger).